Reading from the N-terminus, the 130-residue chain is Small ribosomal subunit protein uS8 (130 aa).

It belongs to the universal ribosomal protein uS8 family. As to quaternary structure, part of the 30S ribosomal subunit.

In terms of biological role, one of the primary rRNA binding proteins, it binds directly to 16S rRNA central domain where it helps coordinate assembly of the platform of the 30S subunit. The protein is Small ribosomal subunit protein uS8 of Methanocorpusculum labreanum (strain ATCC 43576 / DSM 4855 / Z).